Reading from the N-terminus, the 270-residue chain is MIISFVNNKGGVLKTTMATNVAGSLVKLCPEQRKVILDLDGQGNVSASFGQNPERLNNTLIDILLKVPKFNGANSSIEIDDCLLPVYEGLDILPCNFELNFADIDIARKKYKASDIAEIVKQLTRRYDFVLLDTPPNMATLVSTAMSLSDVIVIPFEPDQYSMLGLMRIVETIDTFKEKNPNLKTILVPTKVNMRTRLHNDVIELVKSKAHKNNVAFSEHFVSLTSKSSAAVGYEKLPISLVSPTSNKKYQTEYLEITKEILNLVNHGHQ.

The protein belongs to the ParA family.

The protein is ParA family protein MPN_688 of Mycoplasma pneumoniae (strain ATCC 29342 / M129 / Subtype 1) (Mycoplasmoides pneumoniae).